Consider the following 474-residue polypeptide: 3-isopropylmalate dehydratase large subunit (474 aa).

3 residues coordinate [4Fe-4S] cluster: C350, C415, and C418.

Belongs to the aconitase/IPM isomerase family. LeuC type 1 subfamily. As to quaternary structure, heterodimer of LeuC and LeuD. [4Fe-4S] cluster is required as a cofactor.

The enzyme catalyses (2R,3S)-3-isopropylmalate = (2S)-2-isopropylmalate. The protein operates within amino-acid biosynthesis; L-leucine biosynthesis; L-leucine from 3-methyl-2-oxobutanoate: step 2/4. Its function is as follows. Catalyzes the isomerization between 2-isopropylmalate and 3-isopropylmalate, via the formation of 2-isopropylmaleate. This is 3-isopropylmalate dehydratase large subunit from Phenylobacterium zucineum (strain HLK1).